Reading from the N-terminus, the 118-residue chain is V-type proton ATPase subunit G 3 (118 aa).

The stretch at 3-54 forms a coiled coil; it reads SQSQGIQQLLQAEKRAKDKLEEAKKRKNKRLRQAKEEATADIDQYRLKREAD. The disordered stretch occupies residues 19 to 39; the sequence is KDKLEEAKKRKNKRLRQAKEE.

It belongs to the V-ATPase G subunit family. As to quaternary structure, V-ATPase is a heteromultimeric enzyme made up of two complexes: the ATP-hydrolytic V1 complex and the proton translocation V0 complex. The V1 complex consists of three catalytic AB heterodimers that form a heterohexamer, three peripheral stalks each consisting of EG heterodimers, one central rotor including subunits D and F, and the regulatory subunits C and H. The proton translocation complex V0 consists of the proton transport subunit a, a ring of proteolipid subunits c9c'', rotary subunit d, subunits e and f, and two accessory subunits.

Functionally, subunit of the V1 complex of vacuolar(H+)-ATPase (V-ATPase), a multisubunit enzyme composed of a peripheral complex (V1) that hydrolyzes ATP and a membrane integral complex (V0) that translocates protons. V-ATPase is responsible for acidifying and maintaining the pH of intracellular compartments and in some cell types, is targeted to the plasma membrane, where it is responsible for acidifying the extracellular environment. The chain is V-type proton ATPase subunit G 3 (atp6v1g3) from Xenopus laevis (African clawed frog).